We begin with the raw amino-acid sequence, 221 residues long: GTP-binding nuclear protein Ran-2 (221 aa).

Residues 10–174 (DYPSFKLVIV…LYLARKLAGD (165 aa)) form the Small GTPase Ran-type domain. GTP is bound at residue 21-28 (DGGTGKTT). Residues 40–48 (KKYEPTIGV) form a switch-I region. Residues glycine 71, 125–128 (NKVD), and 153–155 (SAK) each bind GTP. The interval 71-87 (GQEKFGGLRDGYYIHGQ) is switch-II.

It belongs to the small GTPase superfamily. Ran family. As to quaternary structure, found in a nuclear export complex with RanGTP, exportin and pre-miRNA.

The protein resides in the nucleus. GTP-binding protein involved in nucleocytoplasmic transport. Required for the import of protein into the nucleus and also for RNA export. Involved in chromatin condensation and control of cell cycle. The polypeptide is GTP-binding nuclear protein Ran-2 (RAN2) (Oryza sativa subsp. indica (Rice)).